We begin with the raw amino-acid sequence, 483 residues long: Regulatory protein ViaA (483 aa).

Belongs to the ViaA family. Homodimer. Interacts with RavA.

It localises to the cytoplasm. Component of the RavA-ViaA chaperone complex, which may act on the membrane to optimize the function of some of the respiratory chains. ViaA stimulates the ATPase activity of RavA. The sequence is that of Regulatory protein ViaA from Escherichia coli (strain 55989 / EAEC).